Reading from the N-terminus, the 443-residue chain is Xaa-Pro dipeptidase (443 aa).

Residues aspartate 246, aspartate 257, histidine 339, glutamate 384, and glutamate 423 each coordinate Mn(2+).

It belongs to the peptidase M24B family. Bacterial-type prolidase subfamily. Requires Mn(2+) as cofactor.

It catalyses the reaction Xaa-L-Pro dipeptide + H2O = an L-alpha-amino acid + L-proline. Its function is as follows. Splits dipeptides with a prolyl residue in the C-terminal position. This chain is Xaa-Pro dipeptidase, found in Enterobacter sp. (strain 638).